Here is a 397-residue protein sequence, read N- to C-terminus: Flavohemoprotein (397 aa).

Positions 4–140 (SFSPHTITLI…IANLLKDREA (137 aa)) constitute a Globin domain. Histidine 87 serves as a coordination point for heme b. Catalysis depends on charge relay system residues tyrosine 97 and glutamate 139. The segment at 151–397 (GGWIHWRRFV…FGPMDEEMAA (247 aa)) is reductase. In terms of domain architecture, FAD-binding FR-type spans 154–258 (IHWRRFVISK…TPPVGDFFLP (105 aa)). FAD-binding positions include tyrosine 192 and 207–210 (RNYS). 271–276 (GVGLTP) contributes to the NADP(+) binding site. FAD is bound at residue 387–390 (FFGP).

It belongs to the globin family. Two-domain flavohemoproteins subfamily. In the C-terminal section; belongs to the flavoprotein pyridine nucleotide cytochrome reductase family. It depends on heme b as a cofactor. FAD is required as a cofactor.

It carries out the reaction 2 nitric oxide + NADPH + 2 O2 = 2 nitrate + NADP(+) + H(+). The enzyme catalyses 2 nitric oxide + NADH + 2 O2 = 2 nitrate + NAD(+) + H(+). In terms of biological role, is involved in NO detoxification in an aerobic process, termed nitric oxide dioxygenase (NOD) reaction that utilizes O(2) and NAD(P)H to convert NO to nitrate, which protects the bacterium from various noxious nitrogen compounds. Therefore, plays a central role in the inducible response to nitrosative stress. This is Flavohemoprotein from Xylella fastidiosa (strain Temecula1 / ATCC 700964).